Consider the following 514-residue polypeptide: Cytochrome bd-II ubiquinol oxidase subunit 1 (514 aa).

The Cytoplasmic portion of the chain corresponds to 1 to 22; that stretch reads MWDVIDLSRWQFALTALYHFLF. Histidine 19 provides a ligand contact to heme. Residues 23-42 traverse the membrane as a helical segment; it reads VPLTLGLIFLLAIMETIYVV. At 43–94 the chain is on the periplasmic side; it reads TGKTIYRDMTRFWGKLFGINFALGVATGLTMEFQFGTNWSFYSNYVGDIFGA. The chain crosses the membrane as a helical span at residues 95–114; sequence PLAMEALMAFFLESTFVGLF. Topologically, residues 115 to 129 are cytoplasmic; sequence FFGWQRLNKYQHLLV. Residues 130 to 149 traverse the membrane as a helical segment; sequence TWLVAFGSNLSALWILNANG. The Periplasmic segment spans residues 150-187; that stretch reads WMQYPTGAHFDIDTLRMEMTSFSELVFNPVSQVKFVHT. Residue histidine 186 participates in heme binding. Residues 188-207 traverse the membrane as a helical segment; sequence VMAGYVTGAMFIMAISAWYL. Topologically, residues 208-219 are cytoplasmic; it reads LRGRERNVALRS. A helical transmembrane segment spans residues 220 to 239; it reads FAIGSVFGTLAIIGTLQLGD. Over 240–392 the chain is Periplasmic; the sequence is SSAYEVAQVQ…VAPVFWSFRI (153 aa). Methionine 393 is a binding site for heme. The helical transmembrane segment at 393–412 threads the bilayer; the sequence is MVGCGSLLLLVMLIALVQTL. Topologically, residues 413–470 are cytoplasmic; sequence RGKIDQHRWVLKMALWSLPLPWIAIEAGWFMTEFGRQPWAIQDILPTYSAHSALTTGQ. Residues 471 to 490 traverse the membrane as a helical segment; the sequence is LAFSLIMIVGLYTLFLIAEV. The Periplasmic portion of the chain corresponds to 491 to 514; it reads YLMQKYARLGPSAMQSEQPTQQQG.

This sequence belongs to the cytochrome ubiquinol oxidase subunit 1 family. Heterodimer of subunits I and II. It depends on heme as a cofactor. In terms of processing, the N-terminus is blocked.

It is found in the cell inner membrane. The enzyme catalyses 2 a ubiquinol + O2 + n H(+)(in) = 2 a ubiquinone + 2 H2O + n H(+)(out). The protein operates within energy metabolism; oxidative phosphorylation. Its activity is regulated as follows. Inhibited by cyanide; is more sensitive to cyanide than cytochrome bd-I oxidase. In terms of biological role, a terminal oxidase that catalyzes quinol-dependent, Na(+)-independent oxygen uptake. Prefers menadiol over other quinols although ubiquinol was not tested. Generates a proton motive force using protons and electrons from opposite sides of the membrane to generate H(2)O, transferring 1 proton/electron. The sequence is that of Cytochrome bd-II ubiquinol oxidase subunit 1 (appC) from Escherichia coli (strain K12).